Consider the following 89-residue polypeptide: Small ribosomal subunit protein uS15 (89 aa).

This sequence belongs to the universal ribosomal protein uS15 family. In terms of assembly, part of the 30S ribosomal subunit. Forms a bridge to the 50S subunit in the 70S ribosome, contacting the 23S rRNA.

Its function is as follows. One of the primary rRNA binding proteins, it binds directly to 16S rRNA where it helps nucleate assembly of the platform of the 30S subunit by binding and bridging several RNA helices of the 16S rRNA. In terms of biological role, forms an intersubunit bridge (bridge B4) with the 23S rRNA of the 50S subunit in the ribosome. This Geobacillus stearothermophilus (Bacillus stearothermophilus) protein is Small ribosomal subunit protein uS15.